The primary structure comprises 547 residues: Agglutinin-1 (547 aa).

Positions 1–20 (MKFETTKNKLHGNAYYQAQF) are cleaved as a signal peptide. Q21 is modified (pyrrolidone carboxylic acid). Residue E183 is part of the active site. Cystine bridges form between C266-C288, C305-C324, and C348-C365. A propeptide spans 279–280 (RS) (linker peptide). The Ricin B-type lectin 1 domain occupies 292-419 (YEPTVRIGGR…YRMRQGWRTG (128 aa)). The 1-alpha repeat unit spans residues 302–344 (DGLCVDVSDNAYNNGNPIILWKCKDQLEVNQLWTLKSDKTIRS). The stretch at 345–385 (KGKCLTTYGYAPGNYVMIYDCSSAVAEATYWDIWDNGTIIN) is one 1-beta repeat. N-linked (GlcNAc...) asparagine glycans are attached at residues N380 and N420. A 1-gamma repeat occupies 388–420 (SGLVLSAESSSMGGTLTVQKNDYRMRQGWRTGN). In terms of domain architecture, Ricin B-type lectin 2 spans 422 to 546 (TSPFVTSIAG…GNANQMWATL (125 aa)). The stretch at 433–468 (FKLCMEAHGNSMWLDVCDITKEEQQWAVYPDGSIRP) is one 2-alpha repeat. 2 disulfide bridges follow: C436–C449 and C475–C492. The stretch at 472–511 (TNNCLTCEEHKQGATIVMMGCSNAWASQRWVFKSDGTIYN) is one 2-beta repeat. One copy of the 2-gamma repeat lies at 514–547 (DDMVMDVKSSDPSLKQIILWPYTGNANQMWATLF).

It in the N-terminal section; belongs to the ribosome-inactivating protein family. Type 2 RIP subfamily. As to quaternary structure, heterotetramer of two A and two B chains.

It catalyses the reaction Endohydrolysis of the N-glycosidic bond at one specific adenosine on the 28S rRNA.. Its function is as follows. The A chain is responsible for inhibiting protein synthesis through the catalytic inactivation of 60S ribosomal subunits by removing adenine from position 4,324 of 28S rRNA. Less toxic than abrin-a. The B chain is a galactose-specific lectin that facilitates the binding to the cell membrane that precedes endocytosis. The chain is Agglutinin-1 from Abrus precatorius (Indian licorice).